The chain runs to 573 residues: Phosphoenolpyruvate-protein phosphotransferase (573 aa).

His190 functions as the Tele-phosphohistidine intermediate in the catalytic mechanism. Substrate-binding residues include Arg297 and Arg333. Mg(2+) contacts are provided by Glu432 and Asp456. 455–456 is a binding site for phosphoenolpyruvate; that stretch reads ND. Position 466 (Arg466) interacts with substrate. Cys503 (proton donor) is an active-site residue.

This sequence belongs to the PEP-utilizing enzyme family. As to quaternary structure, homodimer. Requires Mg(2+) as cofactor.

The protein localises to the cytoplasm. It catalyses the reaction L-histidyl-[protein] + phosphoenolpyruvate = N(pros)-phospho-L-histidyl-[protein] + pyruvate. General (non sugar-specific) component of the phosphoenolpyruvate-dependent sugar phosphotransferase system (sugar PTS). This major carbohydrate active-transport system catalyzes the phosphorylation of incoming sugar substrates concomitantly with their translocation across the cell membrane. Enzyme I transfers the phosphoryl group from phosphoenolpyruvate (PEP) to the phosphoryl carrier protein (HPr). In Staphylococcus carnosus (strain TM300), this protein is Phosphoenolpyruvate-protein phosphotransferase (ptsI).